Here is a 238-residue protein sequence, read N- to C-terminus: 7-cyano-7-deazaguanine synthase (238 aa).

Residue 10 to 20 (LSGGLDSSTVL) coordinates ATP. The Zn(2+) site is built by Cys-190, Cys-198, Cys-201, and Cys-204.

It belongs to the QueC family. The cofactor is Zn(2+).

It carries out the reaction 7-carboxy-7-deazaguanine + NH4(+) + ATP = 7-cyano-7-deazaguanine + ADP + phosphate + H2O + H(+). It participates in purine metabolism; 7-cyano-7-deazaguanine biosynthesis. Catalyzes the ATP-dependent conversion of 7-carboxy-7-deazaguanine (CDG) to 7-cyano-7-deazaguanine (preQ(0)). The protein is 7-cyano-7-deazaguanine synthase of Thermoplasma acidophilum (strain ATCC 25905 / DSM 1728 / JCM 9062 / NBRC 15155 / AMRC-C165).